The primary structure comprises 724 residues: Phosphoribosylformylglycinamidine synthase subunit PurL (724 aa).

The active site involves H46. ATP-binding residues include Y49 and K88. Residue E90 participates in Mg(2+) binding. Substrate contacts are provided by residues 91 to 94 (SHNH) and R113. The active-site Proton acceptor is the H92. D114 is a Mg(2+) binding site. Residue Q237 coordinates substrate. D265 lines the Mg(2+) pocket. 309 to 311 (ESQ) contacts substrate. ATP is bound by residues D489 and G526. N527 is a Mg(2+) binding site. Substrate is bound at residue S529.

It belongs to the FGAMS family. In terms of assembly, monomer. Part of the FGAM synthase complex composed of 1 PurL, 1 PurQ and 2 PurS subunits.

Its subcellular location is the cytoplasm. It carries out the reaction N(2)-formyl-N(1)-(5-phospho-beta-D-ribosyl)glycinamide + L-glutamine + ATP + H2O = 2-formamido-N(1)-(5-O-phospho-beta-D-ribosyl)acetamidine + L-glutamate + ADP + phosphate + H(+). It functions in the pathway purine metabolism; IMP biosynthesis via de novo pathway; 5-amino-1-(5-phospho-D-ribosyl)imidazole from N(2)-formyl-N(1)-(5-phospho-D-ribosyl)glycinamide: step 1/2. Its function is as follows. Part of the phosphoribosylformylglycinamidine synthase complex involved in the purines biosynthetic pathway. Catalyzes the ATP-dependent conversion of formylglycinamide ribonucleotide (FGAR) and glutamine to yield formylglycinamidine ribonucleotide (FGAM) and glutamate. The FGAM synthase complex is composed of three subunits. PurQ produces an ammonia molecule by converting glutamine to glutamate. PurL transfers the ammonia molecule to FGAR to form FGAM in an ATP-dependent manner. PurS interacts with PurQ and PurL and is thought to assist in the transfer of the ammonia molecule from PurQ to PurL. The chain is Phosphoribosylformylglycinamidine synthase subunit PurL from Granulibacter bethesdensis (strain ATCC BAA-1260 / CGDNIH1).